The primary structure comprises 192 residues: Pyridoxal 5'-phosphate synthase subunit PdxT (192 aa).

Residue 50–52 (GES) coordinates L-glutamine. Catalysis depends on Cys82, which acts as the Nucleophile. L-glutamine-binding positions include Arg109 and 136 to 137 (IR). Active-site charge relay system residues include His172 and Glu174.

Belongs to the glutaminase PdxT/SNO family. In terms of assembly, in the presence of PdxS, forms a dodecamer of heterodimers. Only shows activity in the heterodimer.

It carries out the reaction aldehydo-D-ribose 5-phosphate + D-glyceraldehyde 3-phosphate + L-glutamine = pyridoxal 5'-phosphate + L-glutamate + phosphate + 3 H2O + H(+). The catalysed reaction is L-glutamine + H2O = L-glutamate + NH4(+). It functions in the pathway cofactor biosynthesis; pyridoxal 5'-phosphate biosynthesis. Functionally, catalyzes the hydrolysis of glutamine to glutamate and ammonia as part of the biosynthesis of pyridoxal 5'-phosphate. The resulting ammonia molecule is channeled to the active site of PdxS. The polypeptide is Pyridoxal 5'-phosphate synthase subunit PdxT (Haemophilus influenzae (strain PittGG)).